The following is a 180-amino-acid chain: WPP domain-containing protein 2 (180 aa).

Positions Met1–Ser26 are enriched in low complexity. Disordered stretches follow at residues Met1–Trp61 and Ser140–Ala180. Residues Ala27–Ala36 are compositionally biased toward polar residues. The segment covering Ala37–Pro53 has biased composition (basic and acidic residues). The tract at residues Thr44 to Ala147 is WPP. Ser173 carries the phosphoserine modification.

As to quaternary structure, binds to FPP proteins. Interacts with WAP, WIP1, WIP2 and WIP3 through its WPP domain. Interacts with WIT1 and HSP70-1. Expressed in roots, stems, leaves and flowers.

Its subcellular location is the nucleus envelope. The protein resides in the cytoplasm. It localises to the nucleus. It is found in the golgi apparatus. Functionally, regulates the mitotic activity in roots. Plays a role with HSP70-1 in facilitating WIT1 nuclear envelope targeting. This chain is WPP domain-containing protein 2 (WPP2), found in Arabidopsis thaliana (Mouse-ear cress).